A 218-amino-acid chain; its full sequence is Hypoxanthine-guanine phosphoribosyltransferase (218 aa).

Residue Lys-69 coordinates GMP. Lys-103 carries the post-translational modification N6-acetyllysine. Lys-115 participates in a covalent cross-link: Glycyl lysine isopeptide (Lys-Gly) (interchain with G-Cter in SUMO1); alternate. Lys-115 is covalently cross-linked (Glycyl lysine isopeptide (Lys-Gly) (interchain with G-Cter in SUMO2); alternate). Residues 134-142, Lys-166, 186-188, and Asp-194 each bind GMP; these read EDIIDTGKT and KFV. Catalysis depends on Asp-138, which acts as the Proton acceptor. At Thr-142 the chain carries Phosphothreonine. Asp-194 contributes to the Mg(2+) binding site.

Belongs to the purine/pyrimidine phosphoribosyltransferase family. In terms of assembly, homotetramer. It depends on Mg(2+) as a cofactor.

It is found in the cytoplasm. The enzyme catalyses IMP + diphosphate = hypoxanthine + 5-phospho-alpha-D-ribose 1-diphosphate. It catalyses the reaction GMP + diphosphate = guanine + 5-phospho-alpha-D-ribose 1-diphosphate. The protein operates within purine metabolism; IMP biosynthesis via salvage pathway; IMP from hypoxanthine: step 1/1. Its function is as follows. Converts guanine to guanosine monophosphate, and hypoxanthine to inosine monophosphate. Transfers the 5-phosphoribosyl group from 5-phosphoribosylpyrophosphate onto the purine. Plays a central role in the generation of purine nucleotides through the purine salvage pathway. This is Hypoxanthine-guanine phosphoribosyltransferase (Hprt1) from Mus musculus (Mouse).